Here is a 255-residue protein sequence, read N- to C-terminus: Protein BEAN1 (255 aa).

A helical membrane pass occupies residues 37-57 (VLVASAVIGVVITLSCITIIV). The segment covering 69–90 (QRHHHRHRRHHHHHRHRRRRHR) has biased composition (basic residues). 2 disordered regions span residues 69–109 (QRHH…MPYA) and 160–255 (DAPP…ERIV). A compositionally biased stretch (polar residues) spans 193–206 (QRTQGQSRLHTVSM). Over residues 217–226 (GTGSPSDLLP) the composition is skewed to low complexity. The segment covering 234-243 (PSNSQGSPIP) has biased composition (polar residues). Pro residues predominate over residues 244-255 (TQAPMPSPERIV).

As to quaternary structure, interacts with NEDD4.

It localises to the membrane. The polypeptide is Protein BEAN1 (Bean1) (Mus musculus (Mouse)).